A 707-amino-acid polypeptide reads, in one-letter code: Leukotoxin export ATP-binding protein LtxB (707 aa).

The Peptidase C39 domain maps to 4-125 (QKNTNLALQA…ERYQSKVILI (122 aa)). Residue His-83 is part of the active site. A run of 5 helical transmembrane segments spans residues 158–178 (LIVS…FQVV), 191–211 (LNVI…LGGL), 269–289 (ALTS…MWYY), 295–315 (LVVL…SPIL), and 387–407 (AVMV…DLSI). The 279-residue stretch at 158–436 (LIVSIFLQIF…LAQIWQDFQQ (279 aa)) folds into the ABC transmembrane type-1 domain. The ABC transporter domain occupies 468–703 (ISFRNIKFRY…EKGLYSYLHQ (236 aa)). 502 to 509 (GRSGSGKS) is an ATP binding site.

Belongs to the ABC transporter superfamily. Protein-1 exporter (TC 3.A.1.109) family. As to quaternary structure, probably part of a complex composed of LtxB, LtxD and TdeA, which forms a single transport channel across the two membranes.

Its subcellular location is the cell inner membrane. It catalyses the reaction ATP + H2O + proteinSide 1 = ADP + phosphate + proteinSide 2.. Its function is as follows. Involved in the export of the LtxA leukotoxin. The sequence is that of Leukotoxin export ATP-binding protein LtxB from Aggregatibacter actinomycetemcomitans (Actinobacillus actinomycetemcomitans).